Consider the following 55-residue polypeptide: MAKGARDKIKLESTAGTGHFYTTTKNKRNMPEKMLIKKFDPVVRKHVEYKETKIK.

This sequence belongs to the bacterial ribosomal protein bL33 family.

This is Large ribosomal subunit protein bL33 from Paraburkholderia phytofirmans (strain DSM 17436 / LMG 22146 / PsJN) (Burkholderia phytofirmans).